The primary structure comprises 730 residues: Phosphoribosylformylglycinamidine synthase subunit PurL (730 aa).

Residue histidine 44 is part of the active site. ATP is bound by residues tyrosine 47 and lysine 86. Glutamate 88 contacts Mg(2+). Residues 89 to 92 (SHNH) and arginine 111 each bind substrate. Histidine 90 acts as the Proton acceptor in catalysis. Residue aspartate 112 participates in Mg(2+) binding. Glutamine 235 contacts substrate. Position 263 (aspartate 263) interacts with Mg(2+). A substrate-binding site is contributed by 307 to 309 (ESQ). The ATP site is built by asparagine 489 and glycine 526. Position 527 (asparagine 527) interacts with Mg(2+). A substrate-binding site is contributed by serine 529.

The protein belongs to the FGAMS family. In terms of assembly, monomer. Part of the FGAM synthase complex composed of 1 PurL, 1 PurQ and 2 PurS subunits.

It is found in the cytoplasm. It carries out the reaction N(2)-formyl-N(1)-(5-phospho-beta-D-ribosyl)glycinamide + L-glutamine + ATP + H2O = 2-formamido-N(1)-(5-O-phospho-beta-D-ribosyl)acetamidine + L-glutamate + ADP + phosphate + H(+). Its pathway is purine metabolism; IMP biosynthesis via de novo pathway; 5-amino-1-(5-phospho-D-ribosyl)imidazole from N(2)-formyl-N(1)-(5-phospho-D-ribosyl)glycinamide: step 1/2. In terms of biological role, part of the phosphoribosylformylglycinamidine synthase complex involved in the purines biosynthetic pathway. Catalyzes the ATP-dependent conversion of formylglycinamide ribonucleotide (FGAR) and glutamine to yield formylglycinamidine ribonucleotide (FGAM) and glutamate. The FGAM synthase complex is composed of three subunits. PurQ produces an ammonia molecule by converting glutamine to glutamate. PurL transfers the ammonia molecule to FGAR to form FGAM in an ATP-dependent manner. PurS interacts with PurQ and PurL and is thought to assist in the transfer of the ammonia molecule from PurQ to PurL. The protein is Phosphoribosylformylglycinamidine synthase subunit PurL of Pelagibacter ubique (strain HTCC1062).